The chain runs to 201 residues: Dephospho-CoA kinase (201 aa).

Positions 4-201 (SVGLTGNIAS…KYLREAKIKQ (198 aa)) constitute a DPCK domain. Residue 12-17 (ASGKST) coordinates ATP.

The protein belongs to the CoaE family.

It localises to the cytoplasm. The enzyme catalyses 3'-dephospho-CoA + ATP = ADP + CoA + H(+). It participates in cofactor biosynthesis; coenzyme A biosynthesis; CoA from (R)-pantothenate: step 5/5. Its function is as follows. Catalyzes the phosphorylation of the 3'-hydroxyl group of dephosphocoenzyme A to form coenzyme A. In Legionella pneumophila (strain Paris), this protein is Dephospho-CoA kinase.